A 166-amino-acid polypeptide reads, in one-letter code: Crossover junction endodeoxyribonuclease RuvC (166 aa).

Active-site residues include Asp-11, Glu-70, and Asp-142. Mg(2+)-binding residues include Asp-11, Glu-70, and Asp-142.

Belongs to the RuvC family. In terms of assembly, homodimer which binds Holliday junction (HJ) DNA. The HJ becomes 2-fold symmetrical on binding to RuvC with unstacked arms; it has a different conformation from HJ DNA in complex with RuvA. In the full resolvosome a probable DNA-RuvA(4)-RuvB(12)-RuvC(2) complex forms which resolves the HJ. The cofactor is Mg(2+).

It localises to the cytoplasm. The enzyme catalyses Endonucleolytic cleavage at a junction such as a reciprocal single-stranded crossover between two homologous DNA duplexes (Holliday junction).. Functionally, the RuvA-RuvB-RuvC complex processes Holliday junction (HJ) DNA during genetic recombination and DNA repair. Endonuclease that resolves HJ intermediates. Cleaves cruciform DNA by making single-stranded nicks across the HJ at symmetrical positions within the homologous arms, yielding a 5'-phosphate and a 3'-hydroxyl group; requires a central core of homology in the junction. The consensus cleavage sequence is 5'-(A/T)TT(C/G)-3'. Cleavage occurs on the 3'-side of the TT dinucleotide at the point of strand exchange. HJ branch migration catalyzed by RuvA-RuvB allows RuvC to scan DNA until it finds its consensus sequence, where it cleaves and resolves the cruciform DNA. The protein is Crossover junction endodeoxyribonuclease RuvC of Nitratidesulfovibrio vulgaris (strain ATCC 29579 / DSM 644 / CCUG 34227 / NCIMB 8303 / VKM B-1760 / Hildenborough) (Desulfovibrio vulgaris).